Reading from the N-terminus, the 389-residue chain is MLGATPAAAGVAEHVTEPVAYDAILLAGFGGPEGQDDVIPFLRNVTRGRGILDERLEEVAQHYRHFGGVSPINDQNRALKAALEAELASRGIDLPVLWGNRNWDPYLADALTEADQRGFTKLIAVATSAYSSYSSCRQYREDFARALRETGLEGRIQIDKVRQFFDHPGFVEPFIEGVKNAVEELRERAPEIHPATGVRILFSTHSIPSTDAGKSGPSGRPDSGEPWGEGGAYAAQHLAVAEIVSHEATGGTIGWDLVYQSRSGPPSMPWLEPDINDRIAELPELGVKAIIIVPLGFVSDHMEVLWDLDTEAMESSEENGLLAVRVPTPGTHAKYVKGLVDLVLERRDGLPVAQRPSLTTLGPWYDVCRPGCCENVRLGFKPAVAGLTP.

Residues Ser-70 and Tyr-139 each contribute to the Fe-coproporphyrin III site. His-205 contributes to the Fe(2+) binding site. Residues 207-229 form a disordered region; that stretch reads IPSTDAGKSGPSGRPDSGEPWGE. A Fe(2+)-binding site is contributed by Glu-303.

This sequence belongs to the ferrochelatase family.

It is found in the cytoplasm. It catalyses the reaction Fe-coproporphyrin III + 2 H(+) = coproporphyrin III + Fe(2+). It functions in the pathway porphyrin-containing compound metabolism; protoheme biosynthesis. Functionally, involved in coproporphyrin-dependent heme b biosynthesis. Catalyzes the insertion of ferrous iron into coproporphyrin III to form Fe-coproporphyrin III. The sequence is that of Coproporphyrin III ferrochelatase from Leifsonia xyli subsp. xyli (strain CTCB07).